Consider the following 625-residue polypeptide: Adenine deaminase 2 (625 aa).

The protein belongs to the metallo-dependent hydrolases superfamily. Adenine deaminase family. It depends on Mn(2+) as a cofactor.

It catalyses the reaction adenine + H2O + H(+) = hypoxanthine + NH4(+). The polypeptide is Adenine deaminase 2 (Bradyrhizobium diazoefficiens (strain JCM 10833 / BCRC 13528 / IAM 13628 / NBRC 14792 / USDA 110)).